Reading from the N-terminus, the 372-residue chain is Glutamate 5-kinase (372 aa).

Residue K9 coordinates ATP. Positions 49, 136, and 148 each coordinate substrate. Residues 168–169 (TD) and 210–216 (TGGMKSK) each bind ATP. Positions 276-360 (EGKVFIDDGA…PAIEVIHRDS (85 aa)) constitute a PUA domain.

It belongs to the glutamate 5-kinase family.

The protein localises to the cytoplasm. The enzyme catalyses L-glutamate + ATP = L-glutamyl 5-phosphate + ADP. It functions in the pathway amino-acid biosynthesis; L-proline biosynthesis; L-glutamate 5-semialdehyde from L-glutamate: step 1/2. Its function is as follows. Catalyzes the transfer of a phosphate group to glutamate to form L-glutamate 5-phosphate. The chain is Glutamate 5-kinase from Oceanobacillus iheyensis (strain DSM 14371 / CIP 107618 / JCM 11309 / KCTC 3954 / HTE831).